A 428-amino-acid polypeptide reads, in one-letter code: Light-independent protochlorophyllide reductase subunit N (428 aa).

Residues cysteine 16, cysteine 41, and cysteine 102 each coordinate [4Fe-4S] cluster.

The protein belongs to the BchN/ChlN family. In terms of assembly, protochlorophyllide reductase is composed of three subunits; ChlL, ChlN and ChlB. Forms a heterotetramer of two ChlB and two ChlN subunits. The cofactor is [4Fe-4S] cluster.

The catalysed reaction is chlorophyllide a + oxidized 2[4Fe-4S]-[ferredoxin] + 2 ADP + 2 phosphate = protochlorophyllide a + reduced 2[4Fe-4S]-[ferredoxin] + 2 ATP + 2 H2O. It functions in the pathway porphyrin-containing compound metabolism; chlorophyll biosynthesis (light-independent). Functionally, component of the dark-operative protochlorophyllide reductase (DPOR) that uses Mg-ATP and reduced ferredoxin to reduce ring D of protochlorophyllide (Pchlide) to form chlorophyllide a (Chlide). This reaction is light-independent. The NB-protein (ChlN-ChlB) is the catalytic component of the complex. The polypeptide is Light-independent protochlorophyllide reductase subunit N (Synechococcus sp. (strain CC9311)).